We begin with the raw amino-acid sequence, 663 residues long: 4-hydroxy-3-methylbut-2-en-1-yl diphosphate synthase (flavodoxin) (663 aa).

[4Fe-4S] cluster-binding residues include C568, C571, C602, and E609.

This sequence belongs to the IspG family. [4Fe-4S] cluster is required as a cofactor.

The enzyme catalyses (2E)-4-hydroxy-3-methylbut-2-enyl diphosphate + oxidized [flavodoxin] + H2O + 2 H(+) = 2-C-methyl-D-erythritol 2,4-cyclic diphosphate + reduced [flavodoxin]. It participates in isoprenoid biosynthesis; isopentenyl diphosphate biosynthesis via DXP pathway; isopentenyl diphosphate from 1-deoxy-D-xylulose 5-phosphate: step 5/6. Its function is as follows. Converts 2C-methyl-D-erythritol 2,4-cyclodiphosphate (ME-2,4cPP) into 1-hydroxy-2-methyl-2-(E)-butenyl 4-diphosphate. The protein is 4-hydroxy-3-methylbut-2-en-1-yl diphosphate synthase (flavodoxin) of Leptospira interrogans serogroup Icterohaemorrhagiae serovar copenhageni (strain Fiocruz L1-130).